A 115-amino-acid polypeptide reads, in one-letter code: Promotilin (115 aa).

The N-terminal stretch at M1–A25 is a signal peptide. Residues R43–K72 are disordered.

Belongs to the motilin family.

Its subcellular location is the secreted. Plays an important role in the regulation of interdigestive gastrointestinal motility and indirectly causes rhythmic contraction of duodenal and colonic smooth muscle. This Bos taurus (Bovine) protein is Promotilin (MLN).